The chain runs to 205 residues: Holliday junction branch migration complex subunit RuvA (205 aa).

The interval 1-64 is domain I; it reads MIGHIQGVLT…EDAQLLYGFI (64 aa). Residues 65-143 are domain II; it reads SASERSLFRL…DWQPSTPFTD (79 aa). The interval 136–157 is disordered; it reads QPSTPFTDRAPLDSQGMDAREH. Residues 144–156 are flexible linker; it reads RAPLDSQGMDARE. The tract at residues 157 to 205 is domain III; that stretch reads HPADARTDAISALQSLGYKENQAEKALQKVYSAEHNSETLIRLALKQLS.

It belongs to the RuvA family. In terms of assembly, homotetramer. Forms an RuvA(8)-RuvB(12)-Holliday junction (HJ) complex. HJ DNA is sandwiched between 2 RuvA tetramers; dsDNA enters through RuvA and exits via RuvB. An RuvB hexamer assembles on each DNA strand where it exits the tetramer. Each RuvB hexamer is contacted by two RuvA subunits (via domain III) on 2 adjacent RuvB subunits; this complex drives branch migration. In the full resolvosome a probable DNA-RuvA(4)-RuvB(12)-RuvC(2) complex forms which resolves the HJ.

Its subcellular location is the cytoplasm. The RuvA-RuvB-RuvC complex processes Holliday junction (HJ) DNA during genetic recombination and DNA repair, while the RuvA-RuvB complex plays an important role in the rescue of blocked DNA replication forks via replication fork reversal (RFR). RuvA specifically binds to HJ cruciform DNA, conferring on it an open structure. The RuvB hexamer acts as an ATP-dependent pump, pulling dsDNA into and through the RuvAB complex. HJ branch migration allows RuvC to scan DNA until it finds its consensus sequence, where it cleaves and resolves the cruciform DNA. The polypeptide is Holliday junction branch migration complex subunit RuvA (Idiomarina loihiensis (strain ATCC BAA-735 / DSM 15497 / L2-TR)).